We begin with the raw amino-acid sequence, 284 residues long: Pseudouridine-5'-phosphate glycosidase (284 aa).

The active-site Proton donor is Glu-8. Lys-69 and Val-89 together coordinate substrate. Asp-119 is a Mn(2+) binding site. 121–123 is a substrate binding site; the sequence is SQD. The active-site Nucleophile is Lys-140.

The protein belongs to the pseudouridine-5'-phosphate glycosidase family. In terms of assembly, homotrimer. Requires Mn(2+) as cofactor.

It catalyses the reaction D-ribose 5-phosphate + uracil = psi-UMP + H2O. Catalyzes the reversible cleavage of pseudouridine 5'-phosphate (PsiMP) to ribose 5-phosphate and uracil. Functions biologically in the cleavage direction, as part of a pseudouridine degradation pathway. The chain is Pseudouridine-5'-phosphate glycosidase from Pseudothermotoga lettingae (strain ATCC BAA-301 / DSM 14385 / NBRC 107922 / TMO) (Thermotoga lettingae).